The primary structure comprises 603 residues: Probable methyltransferase PMT4 (603 aa).

The Cytoplasmic portion of the chain corresponds to 1 to 12; sequence MKVASVIGLRPR. Residues 13 to 33 traverse the membrane as a helical; Signal-anchor for type II membrane protein segment; sequence ISGLLFLTLGVIALITILVPN. Residues 34-603 lie on the Lumenal side of the membrane; it reads SDSSSTTSTT…LVCQKPLLKK (570 aa). 2 N-linked (GlcNAc...) asparagine glycosylation sites follow: asparagine 96 and asparagine 393.

The protein belongs to the methyltransferase superfamily.

The protein resides in the endoplasmic reticulum membrane. The sequence is that of Probable methyltransferase PMT4 from Arabidopsis thaliana (Mouse-ear cress).